A 466-amino-acid polypeptide reads, in one-letter code: MSNGTIVQCIGAVVDIQFPRDQMPKIYEALTLADEGSSFAEQGLTFEVQQQLGDGVVRTIALGSSDGLRRGMPVSRTGAPISVPVGHGTLGRIMDVLGRPIDEAGPINADEKRAIHQHAPKFDELSPSVELLETGIKVIDLVCPFAKGGKVGLFGGAGVGKTVNMMELINNIAKQHSGLSVFAGVGERTREGNDFYHEMEESNVLDKVAMVFGQMNEPPGNRLRVALTGLTMAEKFRDEGRDILFFVDNIYRYTLAGTEVSALLGRMPSAVGYQPTLAEEMGVLQERITSTKTGSITSIQAVYVPADDLTDPSPATTFQHLDSTVVLSRDIAALGIYPAVDPLDSSSRQLDPQVVGEEHYQVARGVQQTLQRYKELRDIIAILGMDELSPEDKQAVARARKIQRFLSQPFHVAEVFTGSPGKYVPLAETIRGFKMIVEGECDALPEQAFYMVGTIDEAFEKAKKLQ.

Residue 155 to 162 participates in ATP binding; sequence GGAGVGKT.

It belongs to the ATPase alpha/beta chains family. In terms of assembly, F-type ATPases have 2 components, CF(1) - the catalytic core - and CF(0) - the membrane proton channel. CF(1) has five subunits: alpha(3), beta(3), gamma(1), delta(1), epsilon(1). CF(0) has three main subunits: a(1), b(2) and c(9-12). The alpha and beta chains form an alternating ring which encloses part of the gamma chain. CF(1) is attached to CF(0) by a central stalk formed by the gamma and epsilon chains, while a peripheral stalk is formed by the delta and b chains.

Its subcellular location is the cell inner membrane. The catalysed reaction is ATP + H2O + 4 H(+)(in) = ADP + phosphate + 5 H(+)(out). Functionally, produces ATP from ADP in the presence of a proton gradient across the membrane. The catalytic sites are hosted primarily by the beta subunits. The protein is ATP synthase subunit beta of Bordetella avium (strain 197N).